The following is a 247-amino-acid chain: Adenosylcobinamide-GDP ribazoletransferase (247 aa).

Transmembrane regions (helical) follow at residues 34–54 (IITF…VFMV), 59–79 (CGVP…TGGF), 113–133 (GGLA…ELAL), 138–158 (ILAS…LLMY), and 194–214 (VLLP…AIFI).

This sequence belongs to the CobS family. Mg(2+) is required as a cofactor.

The protein resides in the cell inner membrane. The enzyme catalyses alpha-ribazole + adenosylcob(III)inamide-GDP = adenosylcob(III)alamin + GMP + H(+). It catalyses the reaction alpha-ribazole 5'-phosphate + adenosylcob(III)inamide-GDP = adenosylcob(III)alamin 5'-phosphate + GMP + H(+). It participates in cofactor biosynthesis; adenosylcobalamin biosynthesis; adenosylcobalamin from cob(II)yrinate a,c-diamide: step 7/7. Its function is as follows. Joins adenosylcobinamide-GDP and alpha-ribazole to generate adenosylcobalamin (Ado-cobalamin). Also synthesizes adenosylcobalamin 5'-phosphate from adenosylcobinamide-GDP and alpha-ribazole 5'-phosphate. The polypeptide is Adenosylcobinamide-GDP ribazoletransferase (Escherichia coli (strain 55989 / EAEC)).